An 880-amino-acid chain; its full sequence is Valine--tRNA ligase (880 aa).

The 'HIGH' region motif lies at 49-59; it reads PNVTGKLHLGH. Positions 525-529 match the 'KMSKS' region motif; the sequence is KMSKS. An ATP-binding site is contributed by Lys528. The stretch at 809-880 forms a coiled coil; sequence LEGLINIEEE…VKARLAELKR (72 aa).

This sequence belongs to the class-I aminoacyl-tRNA synthetase family. ValS type 1 subfamily. In terms of assembly, monomer.

It localises to the cytoplasm. The catalysed reaction is tRNA(Val) + L-valine + ATP = L-valyl-tRNA(Val) + AMP + diphosphate. In terms of biological role, catalyzes the attachment of valine to tRNA(Val). As ValRS can inadvertently accommodate and process structurally similar amino acids such as threonine, to avoid such errors, it has a 'posttransfer' editing activity that hydrolyzes mischarged Thr-tRNA(Val) in a tRNA-dependent manner. In Geobacillus kaustophilus (strain HTA426), this protein is Valine--tRNA ligase.